Here is a 479-residue protein sequence, read N- to C-terminus: Deoxyribodipyrimidine photo-lyase (479 aa).

The Photolyase/cryptochrome alpha/beta domain occupies serine 6–leucine 137. Tyrosine 229 lines the FAD pocket. Arginine 233 provides a ligand contact to DNA. FAD contacts are provided by residues threonine 241 to serine 245 and glutamate 278 to tyrosine 285. Interaction with DNA stretches follow at residues glutamate 278 to tyrosine 285 and asparagine 344 to arginine 345. Position 375–377 (aspartate 375–aspartate 377) interacts with FAD. Glutamine 407 serves as a coordination point for DNA.

Belongs to the DNA photolyase class-1 family. In terms of assembly, monomer. It depends on FAD as a cofactor. The cofactor is (6R)-5,10-methylene-5,6,7,8-tetrahydrofolate.

It carries out the reaction cyclobutadipyrimidine (in DNA) = 2 pyrimidine residues (in DNA).. Its function is as follows. Involved in repair of UV radiation-induced DNA damage. Catalyzes the light-dependent monomerization (300-600 nm) of cyclobutyl pyrimidine dimers (in cis-syn configuration), which are formed between adjacent bases on the same DNA strand upon exposure to ultraviolet radiation. The sequence is that of Deoxyribodipyrimidine photo-lyase (phr) from Alkalihalophilus pseudofirmus (strain ATCC BAA-2126 / JCM 17055 / OF4) (Bacillus pseudofirmus).